The following is a 338-amino-acid chain: Phosphate acyltransferase (338 aa).

It belongs to the PlsX family. As to quaternary structure, homodimer. Probably interacts with PlsY.

The protein localises to the cytoplasm. The catalysed reaction is a fatty acyl-[ACP] + phosphate = an acyl phosphate + holo-[ACP]. The protein operates within lipid metabolism; phospholipid metabolism. Its function is as follows. Catalyzes the reversible formation of acyl-phosphate (acyl-PO(4)) from acyl-[acyl-carrier-protein] (acyl-ACP). This enzyme utilizes acyl-ACP as fatty acyl donor, but not acyl-CoA. The polypeptide is Phosphate acyltransferase (Mannheimia succiniciproducens (strain KCTC 0769BP / MBEL55E)).